Consider the following 323-residue polypeptide: o-succinylbenzoate synthase (323 aa).

The Proton donor role is filled by Lys-134. Residues Asp-162, Glu-191, and Asp-214 each contribute to the Mg(2+) site. The Proton acceptor role is filled by Lys-236.

Belongs to the mandelate racemase/muconate lactonizing enzyme family. MenC type 1 subfamily. A divalent metal cation is required as a cofactor.

It catalyses the reaction (1R,6R)-6-hydroxy-2-succinyl-cyclohexa-2,4-diene-1-carboxylate = 2-succinylbenzoate + H2O. The protein operates within quinol/quinone metabolism; 1,4-dihydroxy-2-naphthoate biosynthesis; 1,4-dihydroxy-2-naphthoate from chorismate: step 4/7. It functions in the pathway quinol/quinone metabolism; menaquinone biosynthesis. Functionally, converts 2-succinyl-6-hydroxy-2,4-cyclohexadiene-1-carboxylate (SHCHC) to 2-succinylbenzoate (OSB). The protein is o-succinylbenzoate synthase of Yersinia pseudotuberculosis serotype IB (strain PB1/+).